The chain runs to 161 residues: Eukaryotic translation initiation factor 5A-1 (161 aa).

Lys54 is subject to Hypusine.

It belongs to the eIF-5A family. In terms of processing, lys-54 undergoes hypusination, a unique post-translational modification that consists in the addition of a butylamino group from spermidine to lysine side chain, leading to the formation of the unusual amino acid hypusine. eIF-5As are the only known proteins to undergo this modification, which is essential for their function. As to expression, expressed specifically in the germline in the distal region of gonads where germ cells actively proliferate.

It localises to the cytoplasm. Its function is as follows. Translation factor that promotes translation elongation and termination, particularly upon ribosome stalling at specific amino acid sequence contexts. Binds between the exit (E) and peptidyl (P) site of the ribosome and promotes rescue of stalled ribosome: specifically required for efficient translation of polyproline-containing peptides as well as other motifs that stall the ribosome. Acts as a ribosome quality control (RQC) cofactor by joining the RQC complex to facilitate peptidyl transfer during CAT tailing step. Required for mitotic germ cell proliferation, gametogenesis after entry into meiosis, and localization of the P granule component pgl-1 on P granules. The chain is Eukaryotic translation initiation factor 5A-1 (iff-1) from Caenorhabditis elegans.